Reading from the N-terminus, the 250-residue chain is Putative inactive flavonol synthase 2 (250 aa).

The Fe2OG dioxygenase domain maps to 171-250 (TEYVMRINNY…EQWKVQECVA (80 aa)). The Fe cation site is built by His195 and Asp197.

It belongs to the iron/ascorbate-dependent oxidoreductase family.

The sequence is that of Putative inactive flavonol synthase 2 (FLS2) from Arabidopsis thaliana (Mouse-ear cress).